The following is an 805-amino-acid chain: Cell division cycle 5-related protein (805 aa).

2 consecutive HTH myb-type domains span residues 1–58 and 59–108; these read MPRI…DPSI and KKTE…DQAQ. 2 consecutive DNA-binding regions (H-T-H motif) follow at residues 31-54 and 82-104; these read WSRIASLLHRKSAKQCKARWYEWL and WRTIAPLIGRTAAQCLERYEYLL. Over residues 108–127 the composition is skewed to basic and acidic residues; that stretch reads QAKEGDKDEGDDPRKLRPGE. Disordered regions lie at residues 108-143, 246-293, 409-442, and 530-556; these read QAKEGDKDEGDDPRKLRPGEIDPNPETKPARPDPID, HLEG…HVKK, LSTPYRTPGEGSGSTPRQGMTPRGAIGTPSQRSV, and LERRRRSQAVQRELPRPSNVNTSVLRP. The stretch at 142 to 193 forms a coiled coil; it reads IDMDEDELEMLSEARARLANTQGKKAKRKAREKQLEEARRLAALQKRRELRA. Positions 246-274 are enriched in basic and acidic residues; the sequence is HLEGKMRDEIEQQERKKDKERMKKKKESD. Coiled coils occupy residues 511–542 and 678–804; these read EDAADIDERALALRAKQEELERRRRSQAVQRE and YTRA…SKLQ.

Belongs to the CEF1 family. As to quaternary structure, component of the precatalytic, catalytic and postcatalytic spliceosome complexes.

It is found in the nucleus. Its subcellular location is the cytoplasm. Functionally, DNA-binding protein involved in cell cycle control. May act as a transcription activator. Plays a role in pre-mRNA splicing as core component of precatalytic, catalytic and postcatalytic spliceosomal complexes. May also play a role in the response to DNA damage (DDR). The chain is Cell division cycle 5-related protein (cdc5l) from Nematostella vectensis (Starlet sea anemone).